The sequence spans 516 residues: Apolipoprotein N-acyltransferase (516 aa).

6 helical membrane-spanning segments follow: residues 24–44 (LAQA…LLYL), 58–78 (GWCY…ISIH), 90–110 (LLTL…AWLW), 125–145 (LAFA…LTGF), 163–183 (APLG…ALLV), and 192–212 (PPAL…GLAL). One can recognise a CN hydrolase domain in the interval 230–471 (VQGNVEQNLK…RAVLYGEVTP (242 aa)). The active-site Proton acceptor is glutamate 270. Lysine 331 is an active-site residue. Cysteine 383 functions as the Nucleophile in the catalytic mechanism. A helical transmembrane segment spans residues 479-499 (LRWRAWPLAGLAVLLLGWALL).

It belongs to the CN hydrolase family. Apolipoprotein N-acyltransferase subfamily.

The protein resides in the cell inner membrane. It catalyses the reaction N-terminal S-1,2-diacyl-sn-glyceryl-L-cysteinyl-[lipoprotein] + a glycerophospholipid = N-acyl-S-1,2-diacyl-sn-glyceryl-L-cysteinyl-[lipoprotein] + a 2-acyl-sn-glycero-3-phospholipid + H(+). It functions in the pathway protein modification; lipoprotein biosynthesis (N-acyl transfer). Functionally, catalyzes the phospholipid dependent N-acylation of the N-terminal cysteine of apolipoprotein, the last step in lipoprotein maturation. This is Apolipoprotein N-acyltransferase from Azotobacter vinelandii (strain DJ / ATCC BAA-1303).